Consider the following 267-residue polypeptide: GTP cyclohydrolase FolE2 2 (267 aa).

It belongs to the GTP cyclohydrolase IV family.

The enzyme catalyses GTP + H2O = 7,8-dihydroneopterin 3'-triphosphate + formate + H(+). Its pathway is cofactor biosynthesis; 7,8-dihydroneopterin triphosphate biosynthesis; 7,8-dihydroneopterin triphosphate from GTP: step 1/1. Functionally, converts GTP to 7,8-dihydroneopterin triphosphate. The chain is GTP cyclohydrolase FolE2 2 from Cupriavidus metallidurans (strain ATCC 43123 / DSM 2839 / NBRC 102507 / CH34) (Ralstonia metallidurans).